The sequence spans 484 residues: UDP-glucose:undecaprenyl-phosphate glucose-1-phosphate transferase (484 aa).

The next 5 membrane-spanning stretches (helical) occupy residues methionine 37–alanine 57, tyrosine 59–leucine 79, valine 93–valine 113, glycine 122–leucine 142, and isoleucine 299–valine 319.

It belongs to the bacterial sugar transferase family.

The protein localises to the cell inner membrane. The catalysed reaction is di-trans,octa-cis-undecaprenyl phosphate + UDP-alpha-D-glucose = alpha-D-glucosyl di-trans,octa-cis-undecaprenyl diphosphate + UMP. The protein operates within glycan biosynthesis; xanthan biosynthesis. Functionally, is the initiating enzyme for the synthesis of the exopolysaccharide xanthan. Catalyzes the transfer of the glucose-1-phosphate moiety from UDP-Glc onto the carrier lipid undecaprenyl phosphate (C55-P), forming a phosphoanhydride bond yielding to glucosyl-pyrophosphoryl-undecaprenol (Glc-PP-C55). In Xanthomonas campestris pv. campestris, this protein is UDP-glucose:undecaprenyl-phosphate glucose-1-phosphate transferase (gumD).